Here is a 289-residue protein sequence, read N- to C-terminus: Probable ABC transporter permease protein BRA0749/BS1330_II0742 (289 aa).

A run of 6 helical transmembrane segments spans residues 9-29 (FLIL…VVHL), 70-90 (VWTV…AIIL), 99-119 (VARV…AIVW), 144-166 (IQWL…LVTV), 213-233 (IAIV…WVMT), and 260-280 (EASA…VIYI). Residues 65–279 (LWRTAVWTVA…AILLVFTVIY (215 aa)) form the ABC transmembrane type-1 domain.

This sequence belongs to the binding-protein-dependent transport system permease family. In terms of assembly, the complex is composed of two ATP-binding proteins (BRA0745), two transmembrane proteins (BRA0749) and a solute-binding protein (BRA0748).

It is found in the cell inner membrane. Probably part of an ABC transporter complex. Probably responsible for the translocation of the substrate across the membrane. This is Probable ABC transporter permease protein BRA0749/BS1330_II0742 from Brucella suis biovar 1 (strain 1330).